A 115-amino-acid polypeptide reads, in one-letter code: uncharacterized protein (115 aa).

This is an uncharacterized protein from Acidianus convivator (ATV).